Consider the following 846-residue polypeptide: Vinculin (846 aa).

The tract at residues 1-257 (MPVKFHTKTL…VLQLTTTFEE (257 aa)) is interaction with TLN. A coiled-coil region spans residues 315–370 (RAKLLAAADELDQILKELEELQAKGLGDSRQARALAHAAAVKLQELEQEIRKALAE). Residues 617–646 (WVPPRPPLPELEEEEEPPELPPPPEDPASL) form a disordered region.

The protein belongs to the vinculin/alpha-catenin family. Monomer. Interacts with TLN (talin); the interaction facilitates VIN1 binding to F-actin. As to expression, expressed in epithelial tissues, specifically the pinacoderm (outer epithelium) and choanoderm (feeding epithelium) (at protein level). Also detected in migratory cells of the mesohyl (at protein level).

The protein resides in the cytoplasm. The protein localises to the cell cortex. It localises to the cell projection. It is found in the filopodium. Its subcellular location is the cytoskeleton. In terms of biological role, actin filament (F-actin)-binding protein which may play a role in cell-cell adhesion. This chain is Vinculin, found in Oscarella pearsei (Sponge).